An 87-amino-acid chain; its full sequence is Phosphocarrier protein HPr (87 aa).

Residues 1–87 (MEKIFKVTSD…ETMKNEGLGE (87 aa)) form the HPr domain. H14 serves as the catalytic Pros-phosphohistidine intermediate; alternate. The residue at position 14 (H14) is a Tele-phosphohistidine; alternate. S45 carries the post-translational modification Phosphoserine; by HPrK/P.

The protein belongs to the HPr family. The form phosphorylated at the tele nitrogen (N(epsilon)2), instead of the expected pros nitrogen (N(delta)1), of His-14 is not able to transfer its phosphoryl group to the B.subtilis EIIA-Glc domain. This form may be inactive in PTS-catalyzed sugar transport or target an as yet unknown acceptor molecule in an alternative metabolic process.

The protein localises to the cytoplasm. With respect to regulation, phosphorylation on Ser-45 inhibits the phosphoryl transfer from enzyme I to HPr. Its function is as follows. General (non sugar-specific) component of the phosphoenolpyruvate-dependent sugar phosphotransferase system (sugar PTS). This major carbohydrate active-transport system catalyzes the phosphorylation of incoming sugar substrates concomitantly with their translocation across the cell membrane. The phosphoryl group from phosphoenolpyruvate (PEP) is transferred to the phosphoryl carrier protein HPr by enzyme I. Phospho-HPr then transfers it to the PTS EIIA domain. Functionally, P-Ser-HPr interacts with the catabolite control protein A (CcpA), forming a complex that binds to DNA at the catabolite response elements cre, operator sites preceding a large number of catabolite-regulated genes. Thus, P-Ser-HPr is a corepressor in carbon catabolite repression (CCR), a mechanism that allows bacteria to coordinate and optimize the utilization of available carbon sources. P-Ser-HPr mediates glucose catabolite repression of cry4A toxin expression. In Bacillus thuringiensis subsp. israelensis, this protein is Phosphocarrier protein HPr (ptsH).